Here is a 144-residue protein sequence, read N- to C-terminus: Large ribosomal subunit protein uL15 (144 aa).

Basic and acidic residues predominate over residues 1 to 14 (MKLHELKPNEGARD). Residues 1–43 (MKLHELKPNEGARDVRKRVGRGTSSGTGKTAGRGQKGQKARSK) are disordered. A compositionally biased stretch (gly residues) spans 23 to 35 (TSSGTGKTAGRGQ).

The protein belongs to the universal ribosomal protein uL15 family. As to quaternary structure, part of the 50S ribosomal subunit.

Its function is as follows. Binds to the 23S rRNA. This Latilactobacillus sakei subsp. sakei (strain 23K) (Lactobacillus sakei subsp. sakei) protein is Large ribosomal subunit protein uL15.